A 403-amino-acid polypeptide reads, in one-letter code: RNA-binding motif, single-stranded-interacting protein 1 (403 aa).

Residues Pro30–Trp56 are disordered. The span at Ser40–Ser54 shows a compositional bias: low complexity. 2 consecutive RRM domains span residues Thr62–Gln135 and Thr141–Gly226. Thr208 is subject to Phosphothreonine.

The protein resides in the nucleus. Its function is as follows. Single-stranded DNA binding protein that interacts with the region upstream of the C-myc gene. Binds specifically to the DNA sequence motif 5'-[AT]CT[AT][AT]T-3'. Probably has a role in DNA replication. The protein is RNA-binding motif, single-stranded-interacting protein 1 (RBMS1) of Bos taurus (Bovine).